Here is a 272-residue protein sequence, read N- to C-terminus: 3-methyl-2-oxobutanoate hydroxymethyltransferase (272 aa).

The Mg(2+) site is built by D42 and D86. Residues 42-43 (DS), D86, and K116 contribute to the 3-methyl-2-oxobutanoate site. E118 contacts Mg(2+). Catalysis depends on E185, which acts as the Proton acceptor.

The protein belongs to the PanB family. Homodecamer; pentamer of dimers. The cofactor is Mg(2+).

Its subcellular location is the cytoplasm. The catalysed reaction is 3-methyl-2-oxobutanoate + (6R)-5,10-methylene-5,6,7,8-tetrahydrofolate + H2O = 2-dehydropantoate + (6S)-5,6,7,8-tetrahydrofolate. The protein operates within cofactor biosynthesis; (R)-pantothenate biosynthesis; (R)-pantoate from 3-methyl-2-oxobutanoate: step 1/2. Functionally, catalyzes the reversible reaction in which hydroxymethyl group from 5,10-methylenetetrahydrofolate is transferred onto alpha-ketoisovalerate to form ketopantoate. This is 3-methyl-2-oxobutanoate hydroxymethyltransferase from Prochlorococcus marinus (strain NATL1A).